The primary structure comprises 396 residues: Probable sugar efflux transporter (396 aa).

The next 12 membrane-spanning stretches (helical) occupy residues 15-35 (VVTL…PVGL), 50-70 (VGIM…PFML), 81-101 (LICL…AWNF), 103-123 (VLVI…SITA), 136-156 (AQAL…GLPI), 169-189 (TFFA…KLLP), 209-229 (PALM…YTAY), 246-266 (FATV…LVFG), 275-295 (SLVS…LPAA), 301-321 (LAIL…GMQV), 333-353 (VAMA…ALVG), and 364-384 (AIGY…VLIF).

It belongs to the major facilitator superfamily. SotB (TC 2.A.1.2) family.

The protein resides in the cell inner membrane. In terms of biological role, involved in the efflux of sugars. The physiological role may be the reduction of the intracellular concentration of toxic sugars or sugar metabolites. The polypeptide is Probable sugar efflux transporter (Salmonella agona (strain SL483)).